The following is a 400-amino-acid chain: Argininosuccinate synthase (400 aa).

ATP-binding positions include 10–18 and alanine 38; that span reads AYSGGVDTS. Tyrosine 89 is an L-citrulline binding site. Glycine 119 is an ATP binding site. L-aspartate-binding residues include threonine 121, asparagine 125, and aspartate 126. Asparagine 125 contacts L-citrulline. 5 residues coordinate L-citrulline: arginine 129, serine 177, serine 186, glutamate 262, and tyrosine 274.

The protein belongs to the argininosuccinate synthase family. Type 1 subfamily. As to quaternary structure, homotetramer.

The protein resides in the cytoplasm. It carries out the reaction L-citrulline + L-aspartate + ATP = 2-(N(omega)-L-arginino)succinate + AMP + diphosphate + H(+). It functions in the pathway amino-acid biosynthesis; L-arginine biosynthesis; L-arginine from L-ornithine and carbamoyl phosphate: step 2/3. This chain is Argininosuccinate synthase, found in Nostoc sp. (strain PCC 7120 / SAG 25.82 / UTEX 2576).